The chain runs to 623 residues: EIN3-binding F-box protein 2 (623 aa).

The 55-residue stretch at 52–106 (QTSIDVLPEECLFEILRRLPSGQERSACACVSKHWLNLLSSISRSEVNESSVQDV) folds into the F-box domain. LRR repeat units lie at residues 119–147 (GKKA…QIRG), 151–176 (ESKV…SLWN), 177–202 (LPAV…DLSR), 203–228 (CPGI…TIDS), 229–254 (CSGV…SIRS), 255–281 (CPRI…KLQM), 307–334 (LQGV…SVMS), 335–360 (CRGM…SLNK), 361–386 (CLLV…KLEE), 387–413 (CHRI…SLAN), 414–441 (CLGI…SIRC), 442–467 (CPGF…ELCG), 468–494 (LNGV…NLSE), 495–521 (CINV…NLDG), 522–547 (CKNI…DISN), 548–574 (TLVS…SIGG), 575–600 (CSSI…NIQR), and 601–623 (CGRI…DILY).

Part of a SCF (SKP1-cullin-F-box) protein ligase complex. Interacts with CUL1, SKP1A/ASK1, SKP1B/ASK2, EIN3, and EIL1. As to expression, ubiquitous.

The protein resides in the nucleus. Its pathway is protein modification; protein ubiquitination. Component of SCF(EBF1) E3 ubiquitin ligase complexes, which may mediate the ubiquitination and subsequent proteasomal degradation of target proteins (probably including EIN3 and EIL1). Regulator of the ethylene signaling cascade by modulating the stability of EIN3 and EIL1 proteins. The sequence is that of EIN3-binding F-box protein 2 (EBF2) from Arabidopsis thaliana (Mouse-ear cress).